Reading from the N-terminus, the 232-residue chain is Putative N-acetylmannosamine-6-phosphate 2-epimerase (232 aa).

It belongs to the NanE family.

The enzyme catalyses an N-acyl-D-glucosamine 6-phosphate = an N-acyl-D-mannosamine 6-phosphate. It functions in the pathway amino-sugar metabolism; N-acetylneuraminate degradation; D-fructose 6-phosphate from N-acetylneuraminate: step 3/5. Converts N-acetylmannosamine-6-phosphate (ManNAc-6-P) to N-acetylglucosamine-6-phosphate (GlcNAc-6-P). This is Putative N-acetylmannosamine-6-phosphate 2-epimerase from Synechococcus elongatus (strain ATCC 33912 / PCC 7942 / FACHB-805) (Anacystis nidulans R2).